A 249-amino-acid polypeptide reads, in one-letter code: 1-(5-phosphoribosyl)-5-[(5-phosphoribosylamino)methylideneamino] imidazole-4-carboxamide isomerase (249 aa).

The active-site Proton acceptor is aspartate 8. The active-site Proton donor is aspartate 130.

The protein belongs to the HisA/HisF family.

It localises to the cytoplasm. The catalysed reaction is 1-(5-phospho-beta-D-ribosyl)-5-[(5-phospho-beta-D-ribosylamino)methylideneamino]imidazole-4-carboxamide = 5-[(5-phospho-1-deoxy-D-ribulos-1-ylimino)methylamino]-1-(5-phospho-beta-D-ribosyl)imidazole-4-carboxamide. It participates in amino-acid biosynthesis; L-histidine biosynthesis; L-histidine from 5-phospho-alpha-D-ribose 1-diphosphate: step 4/9. This is 1-(5-phosphoribosyl)-5-[(5-phosphoribosylamino)methylideneamino] imidazole-4-carboxamide isomerase from Nitrosococcus oceani (strain ATCC 19707 / BCRC 17464 / JCM 30415 / NCIMB 11848 / C-107).